A 1516-amino-acid polypeptide reads, in one-letter code: UDP-glucose:glycoprotein glucosyltransferase 2 (1516 aa).

An N-terminal signal peptide occupies residues 1 to 27; that stretch reads MAPAKATNVVRLLLGSTALWLSQLGSG. N256, N286, N920, and N950 each carry an N-linked (GlcNAc...) asparagine glycan. The segment at 1220 to 1516 is glucosyltransferase; that stretch reads LHKENKKEKD…QDTILTHDEL (297 aa). Y1289 carries the post-translational modification Phosphotyrosine. Residues 1513-1516 carry the Prevents secretion from ER motif; sequence HDEL.

It belongs to the glycosyltransferase 8 family. In terms of assembly, interacts with METTL23. Interacts with SELENOF. The cofactor is Ca(2+). Requires Mn(2+) as cofactor. Higher levels in kidney, pancreas, heart, and skeletal muscle.

It localises to the endoplasmic reticulum lumen. The protein resides in the endoplasmic reticulum-Golgi intermediate compartment. The enzyme catalyses N(4)-(alpha-D-Man-(1-&gt;2)-alpha-D-Man-(1-&gt;2)-alpha-D-Man-(1-&gt;3)-[alpha-D-Man-(1-&gt;2)-alpha-D-Man-(1-&gt;3)-[alpha-D-Man-(1-&gt;2)-alpha-D-Man-(1-&gt;6)]-alpha-D-Man-(1-&gt;6)]-beta-D-Man-(1-&gt;4)-beta-D-GlcNAc-(1-&gt;4)-beta-D-GlcNAc)-L-asparaginyl-[protein] (N-glucan mannose isomer 9A1,2,3B1,2,3) + UDP-alpha-D-glucose = N(4)-(alpha-D-Glc-(1-&gt;3)-alpha-D-Man-(1-&gt;2)-alpha-D-Man-(1-&gt;2)-alpha-D-Man-(1-&gt;3)-[alpha-D-Man-(1-&gt;2)-alpha-D-Man-(1-&gt;3)-[alpha-D-Man-(1-&gt;2)-alpha-D-Man-(1-&gt;6)]-alpha-D-Man-(1-&gt;6)]-beta-D-Man-(1-&gt;4)-beta-D-GlcNAc-(1-&gt;4)-beta-D-GlcNAc)-L-asparaginyl-[protein] + UDP + H(+). It functions in the pathway protein modification; protein glycosylation. With respect to regulation, ethylenediaminetetraacetic acid completely abolishes catalytic activity. Catalytic activity is enhanced by complex formation with SELENOF. Recognizes glycoproteins with minor folding defects. Reglucosylates single N-glycans near the misfolded part of the protein, thus providing quality control for protein folding in the endoplasmic reticulum. Reglucosylated proteins are recognized by calreticulin for recycling to the endoplasmic reticulum and refolding or degradation. The sequence is that of UDP-glucose:glycoprotein glucosyltransferase 2 (UGGT2) from Homo sapiens (Human).